The chain runs to 996 residues: Filament-like plant protein 5 (996 aa).

The tract at residues 1–20 (MEGRGWPWKRKSSDKATTEK) is disordered. Coiled-coil stretches lie at residues 59 to 94 (THMS…TKES), 133 to 248 (TAED…KYDL), 280 to 301 (VKKI…RKKL), and 359 to 387 (LTRR…LQVS). 2 disordered regions span residues 409 to 482 (NNDK…SSSR) and 496 to 534 (VGSD…DEDT). Over residues 417–428 (SNSRNLSESLSS) the composition is skewed to low complexity. The span at 471-482 (VNGSSKPRSSSR) shows a compositional bias: polar residues. The span at 503 to 527 (ANSASKSSNSVCSRRSVEKQSSSKS) shows a compositional bias: low complexity. 3 coiled-coil regions span residues 601 to 622 (QNSE…VANI), 737 to 841 (DSSC…FTTE), and 876 to 906 (NQEK…QSLQ). A disordered region spans residues 962–996 (IMKSSSVSSSSKEDNEKHTRGLGRFFSSKSKNSAR).

The protein belongs to the FPP family. In terms of assembly, interacts with WPP/MAF proteins.

The polypeptide is Filament-like plant protein 5 (FPP5) (Arabidopsis thaliana (Mouse-ear cress)).